The sequence spans 351 residues: Peptide chain release factor 1 (351 aa).

Gln229 is modified (N5-methylglutamine). The disordered stretch occupies residues 278–297 (RVDDERSADRAAQVGSGDRS).

It belongs to the prokaryotic/mitochondrial release factor family. Post-translationally, methylated by PrmC. Methylation increases the termination efficiency of RF1.

Its subcellular location is the cytoplasm. Functionally, peptide chain release factor 1 directs the termination of translation in response to the peptide chain termination codons UAG and UAA. This Roseobacter denitrificans (strain ATCC 33942 / OCh 114) (Erythrobacter sp. (strain OCh 114)) protein is Peptide chain release factor 1.